A 318-amino-acid chain; its full sequence is Ubiquitin-like domain-containing CTD phosphatase 1 (318 aa).

A2 is modified (N-acetylalanine). A Ubiquitin-like domain is found at 3 to 81 (LPIIVKWGGQ…IMMMGTREES (79 aa)). Residue K117 is modified to N6-acetyllysine. One can recognise an FCP1 homology domain in the interval 133–294 (PREGKKLLVL…LKLTQYLKEI (162 aa)). D143, D145, and D253 together coordinate Mg(2+).

Mg(2+) is required as a cofactor.

It is found in the nucleus. The catalysed reaction is O-phospho-L-seryl-[protein] + H2O = L-seryl-[protein] + phosphate. It carries out the reaction O-phospho-L-threonyl-[protein] + H2O = L-threonyl-[protein] + phosphate. Dephosphorylates 26S nuclear proteasomes, thereby decreasing their proteolytic activity. Recruited to the 19S regulatory particle of the 26S proteasome through its interaction with 19S component PSMD2/RPN1. Once recruited, dephosphorylates 19S component PSMC2/RPT1 which impairs PSMC2 ATPase activity and disrupts 26S proteasome assembly. Has also been reported to stimulate the proteolytic activity of the 26S proteasome. This is Ubiquitin-like domain-containing CTD phosphatase 1 (UBLCP1) from Bos taurus (Bovine).